Consider the following 204-residue polypeptide: Proteasome subunit beta type-3 (204 aa).

It belongs to the peptidase T1B family. In terms of assembly, the 26S proteasome consists of a 20S proteasome core and two 19S regulatory subunits. The 20S proteasome core is composed of 28 subunits that are arranged in four stacked rings, resulting in a barrel-shaped structure. The two end rings are each formed by seven alpha subunits, and the two central rings are each formed by seven beta subunits. The catalytic chamber with the active sites is on the inside of the barrel.

Its subcellular location is the cytoplasm. It localises to the nucleus. Non-catalytic component of the proteasome, a multicatalytic proteinase complex which is characterized by its ability to cleave peptides with Arg, Phe, Tyr, Leu, and Glu adjacent to the leaving group at neutral or slightly basic pH. The proteasome has an ATP-dependent proteolytic activity. This chain is Proteasome subunit beta type-3 (pbs-3), found in Caenorhabditis elegans.